We begin with the raw amino-acid sequence, 219 residues long: MFDADCLKLMFVAGSQDFYHIKGGKNDRINALLDTLELALQSKITAFQFRQKGDLALQDPTQIKQLAMKCQKLCQKYGAPFIVNDEVQLALELKADGVHVGQEDMAIEEVITLCKKRQFIGLSVNTLEQALKARHLDAVAYLGVGPIFPTPSKKDKQVVGVELLKKIKDSGIKKPLIAIGGITMHNAPKLREYGGIAVISAIAQAKDKALAVGKLLNNA.

Residues 48-52 and Asn84 contribute to the 4-amino-2-methyl-5-(diphosphooxymethyl)pyrimidine site; that span reads QFRQK. Mg(2+) is bound by residues Asp85 and Asp104. 4-amino-2-methyl-5-(diphosphooxymethyl)pyrimidine is bound at residue Ser123. 150–152 contributes to the 2-[(2R,5Z)-2-carboxy-4-methylthiazol-5(2H)-ylidene]ethyl phosphate binding site; sequence TPS. Residue Lys153 coordinates 4-amino-2-methyl-5-(diphosphooxymethyl)pyrimidine. Residues Gly181 and 199-200 contribute to the 2-[(2R,5Z)-2-carboxy-4-methylthiazol-5(2H)-ylidene]ethyl phosphate site; that span reads IS.

It belongs to the thiamine-phosphate synthase family. Mg(2+) serves as cofactor.

The enzyme catalyses 2-[(2R,5Z)-2-carboxy-4-methylthiazol-5(2H)-ylidene]ethyl phosphate + 4-amino-2-methyl-5-(diphosphooxymethyl)pyrimidine + 2 H(+) = thiamine phosphate + CO2 + diphosphate. The catalysed reaction is 2-(2-carboxy-4-methylthiazol-5-yl)ethyl phosphate + 4-amino-2-methyl-5-(diphosphooxymethyl)pyrimidine + 2 H(+) = thiamine phosphate + CO2 + diphosphate. It carries out the reaction 4-methyl-5-(2-phosphooxyethyl)-thiazole + 4-amino-2-methyl-5-(diphosphooxymethyl)pyrimidine + H(+) = thiamine phosphate + diphosphate. It functions in the pathway cofactor biosynthesis; thiamine diphosphate biosynthesis; thiamine phosphate from 4-amino-2-methyl-5-diphosphomethylpyrimidine and 4-methyl-5-(2-phosphoethyl)-thiazole: step 1/1. Functionally, condenses 4-methyl-5-(beta-hydroxyethyl)thiazole monophosphate (THZ-P) and 2-methyl-4-amino-5-hydroxymethyl pyrimidine pyrophosphate (HMP-PP) to form thiamine monophosphate (TMP). In Helicobacter pylori (strain ATCC 700392 / 26695) (Campylobacter pylori), this protein is Thiamine-phosphate synthase.